The chain runs to 322 residues: Transcription factor WRKY45-2 (322 aa).

Positions 67–110 (GGEGSEVQSEVTCGGGASAGGKRKAPAANRKANCRRRTQQSSGN) are disordered. Positions 112–180 (VVVKNLDDGQ…YIGEHTCRDP (69 aa)) form a DNA-binding region, WRKY. The segment at 256–284 (SDQEEVLSSLTPGSSAARGGGVAGPFGPD) is disordered.

It belongs to the WRKY group III family. In terms of tissue distribution, expressed in aleurone cells.

It is found in the nucleus. In terms of biological role, transcriptional activator involved in defense responses against pathogens. Acts as a positive regulator of defense responses against the rice blast fungus Magnaporthe oryzae. Acts as a positive regulator of defense responses against the bacterial blight Xanthomonas oryzae pv oryzae (Xoo) and the bacterial streak Xanthomonas oryzae pv oryzicola (Xoc). Acts as a positive regulator of abscisic acid (ABA) signaling that suppresses growth of seedlings. Acts as a negative regulator of salt stress response. Acts as a negative regulator of cold stress response. Acts as a negative regulator of drought stress response. This Oryza sativa subsp. indica (Rice) protein is Transcription factor WRKY45-2.